A 309-amino-acid polypeptide reads, in one-letter code: Haloalkane dehalogenase (309 aa).

An AB hydrolase-1 domain is found at 37–148 (PTVLFLHGNP…FERWEDFHQR (112 aa)). The active-site Nucleophile is Asp110. Catalysis depends on Glu134, which acts as the Proton donor. Residue His278 is the Proton acceptor of the active site.

Belongs to the haloalkane dehalogenase family. Type 2 subfamily. As to quaternary structure, monomer.

The enzyme catalyses 1-haloalkane + H2O = a halide anion + a primary alcohol + H(+). Catalyzes hydrolytic cleavage of carbon-halogen bonds in halogenated aliphatic compounds, leading to the formation of the corresponding primary alcohols, halide ions and protons. The chain is Haloalkane dehalogenase from Mesorhizobium japonicum (strain LMG 29417 / CECT 9101 / MAFF 303099) (Mesorhizobium loti (strain MAFF 303099)).